The sequence spans 94 residues: uncharacterized protein (94 aa).

Residues 1–22 (MIMKNCLLLGALLMGFTGVAMA) form the signal peptide.

This is an uncharacterized protein from Escherichia coli (strain K12).